A 22-amino-acid polypeptide reads, in one-letter code: 5-methyltetrahydropteroyltriglutamate--homocysteine methyltransferase (22 aa).

This sequence belongs to the vitamin-B12 independent methionine synthase family. It depends on Zn(2+) as a cofactor.

It localises to the cytoplasm. The enzyme catalyses 5-methyltetrahydropteroyltri-L-glutamate + L-homocysteine = tetrahydropteroyltri-L-glutamate + L-methionine. The protein operates within amino-acid biosynthesis; L-methionine biosynthesis via de novo pathway; L-methionine from L-homocysteine (MetE route): step 1/1. Its function is as follows. Catalyzes the transfer of a methyl group from 5-methyltetrahydrofolate to homocysteine resulting in methionine formation. The chain is 5-methyltetrahydropteroyltriglutamate--homocysteine methyltransferase from Pseudotsuga menziesii (Douglas-fir).